A 78-amino-acid chain; its full sequence is Calcium/calmodulin-dependent protein kinase II inhibitor 1 (78 aa).

The interval 41-68 (NKRPPKLGQIGRSKRVVIEDDRIDDVLK) is CAMK2 inhibitory domain.

This sequence belongs to the CAMK2N family. As to quaternary structure, interacts with CAMK2B; the presence of Ca(2+)/calmodulin increases the interaction but is not essential. Interacts with CAMK2A; this interaction requires CAMK2A activation by Ca(2+).

It is found in the synapse. It localises to the cell projection. Its subcellular location is the dendrite. The protein resides in the postsynaptic density. Potent and specific inhibitor of CaM-kinase II (CAMK2). Plays a role in the maintenance of long-term retrieval-induced memory in response to contextual fear. Modulates blood pressure and vascular reactivity via regulation of CAMK2 activity in addition to regulation of left ventricular mass. Mediates the NLRP3 inflammasome in cardiomyocytes via acting as an inhibitor of the MAPK14/p38 and MAPK8/JNK pathways, thereby regulating ventricular remodeling and cardiac rhythm post-myocardial infarction. Negatively effects insulin sensitivity and promotes lipid formation in adipose tissues independent of CAMK2 signaling. This chain is Calcium/calmodulin-dependent protein kinase II inhibitor 1 (CAMK2N1), found in Homo sapiens (Human).